The primary structure comprises 465 residues: Iron-sulfur cluster assembly SufBD family protein SH2035 (465 aa).

The protein belongs to the iron-sulfur cluster assembly SufBD family.

In Staphylococcus haemolyticus (strain JCSC1435), this protein is Iron-sulfur cluster assembly SufBD family protein SH2035.